Reading from the N-terminus, the 123-residue chain is Small ribosomal subunit protein uS12 (123 aa).

Asp89 carries the post-translational modification 3-methylthioaspartic acid.

This sequence belongs to the universal ribosomal protein uS12 family. As to quaternary structure, part of the 30S ribosomal subunit. Contacts proteins S8 and S17. May interact with IF1 in the 30S initiation complex.

Its function is as follows. With S4 and S5 plays an important role in translational accuracy. Interacts with and stabilizes bases of the 16S rRNA that are involved in tRNA selection in the A site and with the mRNA backbone. Located at the interface of the 30S and 50S subunits, it traverses the body of the 30S subunit contacting proteins on the other side and probably holding the rRNA structure together. The combined cluster of proteins S8, S12 and S17 appears to hold together the shoulder and platform of the 30S subunit. The chain is Small ribosomal subunit protein uS12 from Brucella abortus (strain S19).